The primary structure comprises 101 residues: Small ribosomal subunit protein uS14 (101 aa).

The protein belongs to the universal ribosomal protein uS14 family. As to quaternary structure, part of the 30S ribosomal subunit. Contacts proteins S3 and S10.

In terms of biological role, binds 16S rRNA, required for the assembly of 30S particles and may also be responsible for determining the conformation of the 16S rRNA at the A site. This Chromobacterium violaceum (strain ATCC 12472 / DSM 30191 / JCM 1249 / CCUG 213 / NBRC 12614 / NCIMB 9131 / NCTC 9757 / MK) protein is Small ribosomal subunit protein uS14.